The sequence spans 364 residues: MRLSDFHYELPPELIAQRPLAERSASRLLCLDRDTGALADRRFRDLPDLLNPGDLLVFNDTRVIPARLLGVKRDTGGRVEVLVERVLDEHRVLAHVRASKSPGEGVVLWLEEALEAVVEGREGDLFCLWFAGDLPVIELLERHGHMPLPPYIERPDAAEDRDRYQTVFASRPGAVAAPTAGLHFDADIMARMRARGVETAAVTLHVGAGTFQPVRVEDVSRHVMHAEWTEVSTQVCDQVAACRARGGRVVAVGTTAVRSLESAAADGELKPFSGDTRLFITPGYTFRVVDALVTNFHLPESTLLMLVSAFAGYEPVMQAYRHAVAERYRFFSYGDAMFIGPQEASDKMQETSGRGERPRFDHEI.

The segment at 344–364 (ASDKMQETSGRGERPRFDHEI) is disordered.

The protein belongs to the QueA family. As to quaternary structure, monomer.

The protein resides in the cytoplasm. The catalysed reaction is 7-aminomethyl-7-carbaguanosine(34) in tRNA + S-adenosyl-L-methionine = epoxyqueuosine(34) in tRNA + adenine + L-methionine + 2 H(+). Its pathway is tRNA modification; tRNA-queuosine biosynthesis. Transfers and isomerizes the ribose moiety from AdoMet to the 7-aminomethyl group of 7-deazaguanine (preQ1-tRNA) to give epoxyqueuosine (oQ-tRNA). This Thioalkalivibrio sulfidiphilus (strain HL-EbGR7) protein is S-adenosylmethionine:tRNA ribosyltransferase-isomerase.